The primary structure comprises 409 residues: Multidrug resistance protein MdtG (409 aa).

Helical transmembrane passes span 16 to 36 (LIVA…VMPF), 58 to 78 (IVFS…GGLA), 92 to 112 (LGMG…QFLI), 115 to 135 (ALLG…ATQV), 146 to 166 (TLST…GLLA), 173 to 193 (PVFF…LFCI), 224 to 244 (LFVT…ILTL), 256 to 276 (VAFI…LLSA), 291 to 311 (ILIT…YVQT), and 379 to 399 (AVFL…WNSL).

Belongs to the major facilitator superfamily. DHA1 family. MdtG (TC 2.A.1.2.20) subfamily.

It localises to the cell inner membrane. Its function is as follows. Confers resistance to fosfomycin and deoxycholate. This Escherichia coli O9:H4 (strain HS) protein is Multidrug resistance protein MdtG.